The chain runs to 190 residues: Elongation factor P 2 (190 aa).

Belongs to the elongation factor P family.

It localises to the cytoplasm. Its pathway is protein biosynthesis; polypeptide chain elongation. Functionally, involved in peptide bond synthesis. Stimulates efficient translation and peptide-bond synthesis on native or reconstituted 70S ribosomes in vitro. Probably functions indirectly by altering the affinity of the ribosome for aminoacyl-tRNA, thus increasing their reactivity as acceptors for peptidyl transferase. The protein is Elongation factor P 2 (efp2) of Chlamydia muridarum (strain MoPn / Nigg).